The primary structure comprises 131 residues: Leptin receptor overlapping transcript-like 1 (131 aa).

A run of 4 helical transmembrane segments spans residues 7 to 27, 32 to 52, 69 to 89, and 100 to 120; these read LISLSFGGAIGLMFLMLGCAL, QYWPLFVLFFYILSPIPYCIA, LAIFLTTGVVVSAFGLPVVFA, and ALVLTGNTVIFATILGFFLVF.

It belongs to the OB-RGRP/VPS55 family. As to quaternary structure, interacts with RAB13.

The protein localises to the membrane. Functionally, negatively regulates growth hormone (GH) receptor cell surface expression in liver. May play a role in liver resistance to GH during periods of reduced nutrient availability. This is Leptin receptor overlapping transcript-like 1 (Leprotl1) from Rattus norvegicus (Rat).